Reading from the N-terminus, the 418-residue chain is Serine hydroxymethyltransferase (418 aa).

Residues L121 and 125 to 127 contribute to the (6S)-5,6,7,8-tetrahydrofolate site; that span reads GHL. K230 carries the N6-(pyridoxal phosphate)lysine modification. Residue 355–357 participates in (6S)-5,6,7,8-tetrahydrofolate binding; that stretch reads SPF.

It belongs to the SHMT family. As to quaternary structure, homodimer. Requires pyridoxal 5'-phosphate as cofactor.

Its subcellular location is the cytoplasm. It catalyses the reaction (6R)-5,10-methylene-5,6,7,8-tetrahydrofolate + glycine + H2O = (6S)-5,6,7,8-tetrahydrofolate + L-serine. It participates in one-carbon metabolism; tetrahydrofolate interconversion. Its pathway is amino-acid biosynthesis; glycine biosynthesis; glycine from L-serine: step 1/1. Functionally, catalyzes the reversible interconversion of serine and glycine with tetrahydrofolate (THF) serving as the one-carbon carrier. This reaction serves as the major source of one-carbon groups required for the biosynthesis of purines, thymidylate, methionine, and other important biomolecules. Also exhibits THF-independent aldolase activity toward beta-hydroxyamino acids, producing glycine and aldehydes, via a retro-aldol mechanism. This chain is Serine hydroxymethyltransferase, found in Streptococcus agalactiae serotype III (strain NEM316).